The sequence spans 504 residues: Acid phosphatase A (504 aa).

A signal peptide spans 1–22; sequence MYTLLDILKGLPLLAVAAIASA. N-linked (GlcNAc...) asparagine glycosylation is found at Asn-84, Asn-112, Asn-168, Asn-260, Asn-415, Asn-450, and Asn-474.

This sequence belongs to the metallophosphoesterase superfamily. Purple acid phosphatase family. Monomer.

It is found in the secreted. It carries out the reaction a phosphate monoester + H2O = an alcohol + phosphate. In terms of biological role, acid phosphatase involved in the regulation of fungal phenotypic traits and virulence in C.parasitica. This chain is Acid phosphatase A, found in Cryphonectria parasitica (strain ATCC 38755 / EP155).